The chain runs to 131 residues: Histone H3-like 4 (131 aa).

K10 is modified (N6,N6,N6-trimethyllysine; alternate). Position 10 is an N6,N6-dimethyllysine; alternate (K10). K10 is modified (N6-acetyllysine; alternate). N6-methyllysine; alternate is present on K10. T12 bears the Phosphothreonine mark. The residue at position 15 (K15) is an N6-acetyllysine. Residue S27 is modified to Phosphoserine. K32 bears the N6,N6,N6-trimethyllysine; alternate mark. K32 is subject to N6,N6-dimethyllysine; alternate. K32 is subject to N6-methyllysine; alternate.

It belongs to the histone H3 family. The nucleosome is a histone octamer containing two molecules each of H2A, H2B, H3 and H4 assembled in one H3-H4 heterotetramer and two H2A-H2B heterodimers. The octamer wraps approximately 147 bp of DNA. In terms of tissue distribution, expressed in roots, seedlings, leaves buds and open flowers.

The protein localises to the nucleus. The protein resides in the chromosome. Core component of nucleosome. Nucleosomes wrap and compact DNA into chromatin, limiting DNA accessibility to the cellular machineries which require DNA as a template. Histones thereby play a central role in transcription regulation, DNA repair, DNA replication and chromosomal stability. DNA accessibility is regulated via a complex set of post-translational modifications of histones, also called histone code, and nucleosome remodeling. This Arabidopsis thaliana (Mouse-ear cress) protein is Histone H3-like 4.